We begin with the raw amino-acid sequence, 115 residues long: Large ribosomal subunit protein P2x (115 aa).

Residues 78–115 are disordered; the sequence is GGGGGAASAAEPVAESKKKVEEVKDESSDDAGMMGLFD. A compositionally biased stretch (basic and acidic residues) spans 91 to 103; the sequence is AESKKKVEEVKDE. S104 and S105 each carry phosphoserine.

The protein belongs to the eukaryotic ribosomal protein P1/P2 family. P1 and P2 exist as dimers at the large ribosomal subunit.

Its function is as follows. Plays an important role in the elongation step of protein synthesis. The polypeptide is Large ribosomal subunit protein P2x (RPP2C) (Arabidopsis thaliana (Mouse-ear cress)).